The following is a 166-amino-acid chain: Endoribonuclease YbeY (166 aa).

Zn(2+) is bound by residues H132, H136, and H142.

It belongs to the endoribonuclease YbeY family. Zn(2+) is required as a cofactor.

It is found in the cytoplasm. Single strand-specific metallo-endoribonuclease involved in late-stage 70S ribosome quality control and in maturation of the 3' terminus of the 16S rRNA. The sequence is that of Endoribonuclease YbeY from Clostridium botulinum (strain ATCC 19397 / Type A).